A 206-amino-acid polypeptide reads, in one-letter code: Ribonuclease HII (206 aa).

The RNase H type-2 domain maps to 14–206 (EFICGIDEVG…FKLRQLGEKV (193 aa)). Asp20, Glu21, and Asp117 together coordinate a divalent metal cation.

The protein belongs to the RNase HII family. Requires Mn(2+) as cofactor. The cofactor is Mg(2+).

The protein resides in the cytoplasm. It catalyses the reaction Endonucleolytic cleavage to 5'-phosphomonoester.. Endonuclease that specifically degrades the RNA of RNA-DNA hybrids. The chain is Ribonuclease HII from Chlorobium chlorochromatii (strain CaD3).